Here is a 317-residue protein sequence, read N- to C-terminus: 4-hydroxy-3-methylbut-2-enyl diphosphate reductase (317 aa).

[4Fe-4S] cluster is bound at residue Cys-12. (2E)-4-hydroxy-3-methylbut-2-enyl diphosphate contacts are provided by His-41 and His-74. Dimethylallyl diphosphate is bound by residues His-41 and His-74. Isopentenyl diphosphate contacts are provided by His-41 and His-74. Cys-97 is a binding site for [4Fe-4S] cluster. His-125 serves as a coordination point for (2E)-4-hydroxy-3-methylbut-2-enyl diphosphate. His-125 lines the dimethylallyl diphosphate pocket. Position 125 (His-125) interacts with isopentenyl diphosphate. The active-site Proton donor is the Glu-127. Thr-168 lines the (2E)-4-hydroxy-3-methylbut-2-enyl diphosphate pocket. Residue Cys-198 participates in [4Fe-4S] cluster binding. (2E)-4-hydroxy-3-methylbut-2-enyl diphosphate contacts are provided by Ser-226, Ser-227, Asn-228, and Ser-270. 4 residues coordinate dimethylallyl diphosphate: Ser-226, Ser-227, Asn-228, and Ser-270. Residues Ser-226, Ser-227, Asn-228, and Ser-270 each contribute to the isopentenyl diphosphate site.

The protein belongs to the IspH family. As to quaternary structure, homodimer. The cofactor is [4Fe-4S] cluster.

It catalyses the reaction isopentenyl diphosphate + 2 oxidized [2Fe-2S]-[ferredoxin] + H2O = (2E)-4-hydroxy-3-methylbut-2-enyl diphosphate + 2 reduced [2Fe-2S]-[ferredoxin] + 2 H(+). It carries out the reaction dimethylallyl diphosphate + 2 oxidized [2Fe-2S]-[ferredoxin] + H2O = (2E)-4-hydroxy-3-methylbut-2-enyl diphosphate + 2 reduced [2Fe-2S]-[ferredoxin] + 2 H(+). It participates in isoprenoid biosynthesis; dimethylallyl diphosphate biosynthesis; dimethylallyl diphosphate from (2E)-4-hydroxy-3-methylbutenyl diphosphate: step 1/1. The protein operates within isoprenoid biosynthesis; isopentenyl diphosphate biosynthesis via DXP pathway; isopentenyl diphosphate from 1-deoxy-D-xylulose 5-phosphate: step 6/6. In terms of biological role, catalyzes the conversion of 1-hydroxy-2-methyl-2-(E)-butenyl 4-diphosphate (HMBPP) into a mixture of isopentenyl diphosphate (IPP) and dimethylallyl diphosphate (DMAPP). Acts in the terminal step of the DOXP/MEP pathway for isoprenoid precursor biosynthesis. The sequence is that of 4-hydroxy-3-methylbut-2-enyl diphosphate reductase from Edwardsiella ictaluri (strain 93-146).